The primary structure comprises 381 residues: Metacaspase-8 (381 aa).

Residues H86 and C140 contribute to the active site. C140 carries the S-nitrosocysteine modification.

This sequence belongs to the peptidase C14B family. Post-translationally, proteolytically processed; by an autocatalytic mechanism.

Cysteine protease that cleaves specifically after arginine residues. Does not cleave caspase-specific substrates. May be involved in the modulation of programmed cell death activated by oxidative stress. The sequence is that of Metacaspase-8 (AMC8) from Arabidopsis thaliana (Mouse-ear cress).